The sequence spans 81 residues: Defensin-like protein 144 (81 aa).

Residues 1-24 form the signal peptide; the sequence is MKNSFRFSFTVITTFIICVLVSGA. 4 disulfide bridges follow: Cys30-Cys74, Cys42-Cys61, Cys47-Cys69, and Cys51-Cys71.

This sequence belongs to the DEFL family.

Its subcellular location is the secreted. The chain is Defensin-like protein 144 (LCR10) from Arabidopsis thaliana (Mouse-ear cress).